A 287-amino-acid polypeptide reads, in one-letter code: MYLNIPTEIWLCILKMDIDSTINLLFTNKYFFDLFEFAKHNFNVLHEVIKRGYVHILKYVDELENLGPLVFIETMNVHDKLKLACNHDQLPIVKYLVETNSNIETINDDVIITASFYGRTNIVEYFIKKDIDNKTIFEALKNACDNGHLETMILLINNGVDIKAKDNFIIKQAISKGHLNIVKYLVENGATIDIEDDTYIINSAQKGYYKMVEYLVYRGADYRTVDDLPIRCALMGGHLDVVKYLQSLGADIEADNESTIDYVFKHGPNESKEYLERYFYWNSLING.

ANK repeat units follow at residues His-40–Phe-71, Asn-76–Thr-105, Asn-107–Lys-134, Thr-135–Ala-164, Lys-165–Ile-194, Asp-196–Thr-224, and Val-225–Ala-254.

This is Putative ankyrin repeat protein R791 from Acanthamoeba polyphaga (Amoeba).